Consider the following 488-residue polypeptide: GlcNAc-binding protein A (488 aa).

Residues 1–24 (MIMIITKKTLLPVTLALFSSGVMA) form the signal peptide. Residues 25–202 (HGYVSSVEGG…SFYNVIDVMF (178 aa)) form the Chitin-binding type-4 domain. In terms of domain architecture, Chitin-binding type-3 spans 439-480 (AGSKVLATDGRIYECKPFPYSGYCIQWSPSATQFEPGVGSDW).

This sequence belongs to the GbpA family.

Its subcellular location is the secreted. In terms of biological role, probably interacts with GlcNAc residues. May promote attachment to both epithelial cell surfaces and chitin. The sequence is that of GlcNAc-binding protein A from Photobacterium profundum (strain SS9).